Consider the following 69-residue polypeptide: MSVLTPLLLRGLAGSARRLPVPRAQIHSKPPREQLGTMDVAIGITSCFLCFLLPAGWVLSHLESYKKRE.

The N-terminal 25 residues, 1-25, are a transit peptide targeting the mitochondrion; that stretch reads MSVLTPLLLRGLAGSARRLPVPRAQ. An SIFI-degron motif is present at residues 2–19; sequence SVLTPLLLRGLAGSARRL. At 26-36 the chain is on the mitochondrial matrix side; that stretch reads IHSKPPREQLG. A helical transmembrane segment spans residues 37 to 60; the sequence is TMDVAIGITSCFLCFLLPAGWVLS. The Mitochondrial intermembrane segment spans residues 61–69; it reads HLESYKKRE.

This sequence belongs to the cytochrome c oxidase VIII family. In terms of assembly, component of the cytochrome c oxidase (complex IV, CIV), a multisubunit enzyme composed of 14 subunits. The complex is composed of a catalytic core of 3 subunits MT-CO1, MT-CO2 and MT-CO3, encoded in the mitochondrial DNA, and 11 supernumerary subunits COX4I, COX5A, COX5B, COX6A, COX6B, COX6C, COX7A, COX7B, COX7C, COX8 and NDUFA4, which are encoded in the nuclear genome. The complex exists as a monomer or a dimer and forms supercomplexes (SCs) in the inner mitochondrial membrane with NADH-ubiquinone oxidoreductase (complex I, CI) and ubiquinol-cytochrome c oxidoreductase (cytochrome b-c1 complex, complex III, CIII), resulting in different assemblies (supercomplex SCI(1)III(2)IV(1) and megacomplex MCI(2)III(2)IV(2)). In response to mitochondrial stress, the precursor protein is ubiquitinated by the SIFI complex in the cytoplasm before mitochondrial import, leading to its degradation. Within the SIFI complex, UBR4 initiates ubiquitin chain that are further elongated or branched by KCMF1.

It localises to the mitochondrion inner membrane. Its pathway is energy metabolism; oxidative phosphorylation. Functionally, component of the cytochrome c oxidase, the last enzyme in the mitochondrial electron transport chain which drives oxidative phosphorylation. The respiratory chain contains 3 multisubunit complexes succinate dehydrogenase (complex II, CII), ubiquinol-cytochrome c oxidoreductase (cytochrome b-c1 complex, complex III, CIII) and cytochrome c oxidase (complex IV, CIV), that cooperate to transfer electrons derived from NADH and succinate to molecular oxygen, creating an electrochemical gradient over the inner membrane that drives transmembrane transport and the ATP synthase. Cytochrome c oxidase is the component of the respiratory chain that catalyzes the reduction of oxygen to water. Electrons originating from reduced cytochrome c in the intermembrane space (IMS) are transferred via the dinuclear copper A center (CU(A)) of subunit 2 and heme A of subunit 1 to the active site in subunit 1, a binuclear center (BNC) formed by heme A3 and copper B (CU(B)). The BNC reduces molecular oxygen to 2 water molecules using 4 electrons from cytochrome c in the IMS and 4 protons from the mitochondrial matrix. This chain is Cytochrome c oxidase subunit 8A, mitochondrial (COX8A), found in Carlito syrichta (Philippine tarsier).